Reading from the N-terminus, the 128-residue chain is Small ribosomal subunit protein uS8c (128 aa).

The protein belongs to the universal ribosomal protein uS8 family. Part of the 30S ribosomal subunit.

It localises to the plastid. The protein resides in the chloroplast. One of the primary rRNA binding proteins, it binds directly to 16S rRNA central domain where it helps coordinate assembly of the platform of the 30S subunit. The chain is Small ribosomal subunit protein uS8c (rps8) from Welwitschia mirabilis (Tree tumbo).